A 141-amino-acid polypeptide reads, in one-letter code: Sec-independent protein translocase protein TatB (141 aa).

A helical transmembrane segment spans residues Met-1–Gly-21. Positions Glu-74–Pro-141 are disordered. Over residues Gln-89–Pro-115 the composition is skewed to pro residues. Residues Pro-116–Thr-129 show a composition bias toward low complexity. Residues Pro-130–Pro-141 are compositionally biased toward pro residues.

Belongs to the TatB family. As to quaternary structure, the Tat system comprises two distinct complexes: a TatABC complex, containing multiple copies of TatA, TatB and TatC subunits, and a separate TatA complex, containing only TatA subunits. Substrates initially bind to the TatABC complex, which probably triggers association of the separate TatA complex to form the active translocon.

The protein localises to the cell inner membrane. Functionally, part of the twin-arginine translocation (Tat) system that transports large folded proteins containing a characteristic twin-arginine motif in their signal peptide across membranes. Together with TatC, TatB is part of a receptor directly interacting with Tat signal peptides. TatB may form an oligomeric binding site that transiently accommodates folded Tat precursor proteins before their translocation. The sequence is that of Sec-independent protein translocase protein TatB from Pseudomonas aeruginosa (strain ATCC 15692 / DSM 22644 / CIP 104116 / JCM 14847 / LMG 12228 / 1C / PRS 101 / PAO1).